We begin with the raw amino-acid sequence, 108 residues long: Anthranilate 1,2-dioxygenase ferredoxin subunit (108 aa).

The Rieske domain maps to 9–105; that stretch reads WHPLGAIDEF…IRIVDGQVEV (97 aa). 4 residues coordinate [2Fe-2S] cluster: C49, H51, C68, and H71.

It belongs to the bacterial ring-hydroxylating dioxygenase ferredoxin component family. In terms of assembly, part of a multicomponent enzyme system composed of a reductase (AndAa), a ferredoxin (AndAb) and a two-subunit oxygenase component (AndAc and AndAd). Requires [2Fe-2S] cluster as cofactor.

It participates in aromatic compound metabolism; anthranilate degradation via hydroxylation; catechol from anthranilate: step 1/1. Its function is as follows. Part of the multicomponent anthranilate dioxygenase, that converts anthranilate to catechol. This protein seems to be a 2Fe-2S ferredoxin. The chain is Anthranilate 1,2-dioxygenase ferredoxin subunit from Burkholderia cepacia (Pseudomonas cepacia).